We begin with the raw amino-acid sequence, 651 residues long: Nucleolin (651 aa).

A compositionally biased stretch (low complexity) spans 1–11; the sequence is MVKLAKGAKTQ. Residues 1 to 230 are disordered; sequence MVKLAKGAKT…AKKTKTDTAS (230 aa). The segment covering 26 to 45 has biased composition (acidic residues); sequence EDSEEEEDMEEDDSSDEEVE. Over residues 54-79 the composition is skewed to low complexity; that stretch reads KKTATPAKATPGKAATPGKKGATPAK. The segment covering 89-101 has biased composition (acidic residues); it reads SEEEEDDSDEEAE. The span at 106 to 116 shows a compositional bias: basic residues; it reads IKNKPVAKKAV. Acidic residues-rich tracts occupy residues 122 to 134, 155 to 168, and 183 to 204; these read SEEDDDDEDESEE, SEEEDDEESEDEPM, and AEEDDEEEDDDDEEDDDDEEEQ. Residue Ser155 is modified to Phosphoserine. Residues 219–228 are compositionally biased toward basic and acidic residues; that stretch reads PEAKKTKTDT. 4 RRM domains span residues 233–309, 325–399, 415–488, and 503–578; these read LSIF…KAMA, RTLF…FTGE, KVLV…FSQG, and KTLF…FAKP. A disordered region spans residues 574–651; it reads DFAKPKGDSQ…GQGKKMRFDD (78 aa). Residues 585–644 show a composition bias toward gly residues; sequence GGRGGFGRGGGFRGGRGGRGGGGGRGFGGRGGGRGRGGFGGRGGGGFRGGQGGGFRGGQG.

The protein localises to the nucleus. It localises to the nucleolus. Functionally, nucleolin is the major nucleolar protein of growing eukaryotic cells. It is found associated with intranucleolar chromatin and pre-ribosomal particles. It induces chromatin decondensation by binding to histone H1. It is thought to play a role in pre-rRNA transcription and ribosome assembly. In Xenopus laevis (African clawed frog), this protein is Nucleolin (ncl).